We begin with the raw amino-acid sequence, 345 residues long: Dihydroorotate dehydrogenase (quinone) (345 aa).

FMN contacts are provided by residues 65–69 (AGLDK) and T89. K69 serves as a coordination point for substrate. 114 to 118 (NRMGF) is a substrate binding site. FMN contacts are provided by N142 and N175. N175 is a binding site for substrate. The active-site Nucleophile is the S178. A substrate-binding site is contributed by N180. Positions 220 and 248 each coordinate FMN. 249–250 (NT) contributes to the substrate binding site. Residues G271, G300, and 321–322 (YT) each bind FMN.

This sequence belongs to the dihydroorotate dehydrogenase family. Type 2 subfamily. As to quaternary structure, monomer. FMN is required as a cofactor.

The protein resides in the cell membrane. The enzyme catalyses (S)-dihydroorotate + a quinone = orotate + a quinol. It functions in the pathway pyrimidine metabolism; UMP biosynthesis via de novo pathway; orotate from (S)-dihydroorotate (quinone route): step 1/1. Catalyzes the conversion of dihydroorotate to orotate with quinone as electron acceptor. This Burkholderia multivorans (strain ATCC 17616 / 249) protein is Dihydroorotate dehydrogenase (quinone).